Here is a 302-residue protein sequence, read N- to C-terminus: tRNA dimethylallyltransferase (302 aa).

12-19 (GPTASGKS) contributes to the ATP binding site. 14–19 (TASGKS) provides a ligand contact to substrate. The segment at 37–40 (DSMQ) is interaction with substrate tRNA.

This sequence belongs to the IPP transferase family. In terms of assembly, monomer. Requires Mg(2+) as cofactor.

The enzyme catalyses adenosine(37) in tRNA + dimethylallyl diphosphate = N(6)-dimethylallyladenosine(37) in tRNA + diphosphate. Functionally, catalyzes the transfer of a dimethylallyl group onto the adenine at position 37 in tRNAs that read codons beginning with uridine, leading to the formation of N6-(dimethylallyl)adenosine (i(6)A). The chain is tRNA dimethylallyltransferase from Corynebacterium diphtheriae (strain ATCC 700971 / NCTC 13129 / Biotype gravis).